A 115-amino-acid chain; its full sequence is DNA-binding protein NP_4416A (115 aa).

The span at 1–11 (MSGEPTDEDLE) shows a compositional bias: acidic residues. The tract at residues 1–46 (MSGEPTDEDLEELRKKKMEQLKEQGGEGQSEAAEAQRQQAEAQKKA) is disordered. The segment covering 12–25 (ELRKKKMEQLKEQG) has biased composition (basic and acidic residues). A compositionally biased stretch (low complexity) spans 29 to 41 (QSEAAEAQRQQAE).

This sequence belongs to the PDCD5 family.

This chain is DNA-binding protein NP_4416A, found in Natronomonas pharaonis (strain ATCC 35678 / DSM 2160 / CIP 103997 / JCM 8858 / NBRC 14720 / NCIMB 2260 / Gabara) (Halobacterium pharaonis).